The following is a 200-amino-acid chain: LHFPL tetraspan subfamily member 6 protein (200 aa).

The signal sequence occupies residues 1-21 (MASSLTCTGVIWALLSFLCAA). A run of 3 helical transmembrane segments spans residues 84-104 (ICTIVTGLGCGLLLLVALTAL), 123-143 (GIQFLGGLLIGAGCALYPLGW), and 166-186 (IGWAYYCTGAGATAAMLLCTW).

Belongs to the LHFP family. In terms of tissue distribution, pancreas, kidney, skeletal muscle, liver, lung brain, heart, colon, small intestine, uterus, testis, prostate, thymus, spleen and placenta.

It is found in the membrane. This is LHFPL tetraspan subfamily member 6 protein from Homo sapiens (Human).